The following is a 278-amino-acid chain: Extracellular metalloprotease GLRG_06511 (278 aa).

Residues Met1–Ala19 form the signal peptide. Asn51 carries N-linked (GlcNAc...) asparagine glycosylation. Zn(2+) is bound at residue His190. Glu191 is a catalytic residue. Residue His194 participates in Zn(2+) binding. Cysteines 227 and 254 form a disulfide.

This sequence belongs to the peptidase M43B family.

It localises to the secreted. In terms of biological role, secreted metalloproteinase that allows assimilation of proteinaceous substrates. This Colletotrichum graminicola (strain M1.001 / M2 / FGSC 10212) (Maize anthracnose fungus) protein is Extracellular metalloprotease GLRG_06511.